The following is a 114-amino-acid chain: Iron-sulfur cluster insertion protein ErpA (114 aa).

3 residues coordinate iron-sulfur cluster: cysteine 42, cysteine 106, and cysteine 108.

Belongs to the HesB/IscA family. In terms of assembly, homodimer. Requires iron-sulfur cluster as cofactor.

Functionally, required for insertion of 4Fe-4S clusters for at least IspG. The polypeptide is Iron-sulfur cluster insertion protein ErpA (Buchnera aphidicola subsp. Acyrthosiphon pisum (strain 5A)).